Reading from the N-terminus, the 201-residue chain is Phosphatidylglycerophosphatase and protein-tyrosine phosphatase 1 (201 aa).

The transit peptide at 1–27 (MAATALLEAGLARVLFYPTLLYTLFRG) directs the protein to the mitochondrion. In terms of domain architecture, Tyrosine-protein phosphatase spans 37–188 (WYHRIDPTVL…LKEFHKQITA (152 aa)). C132 (phosphocysteine intermediate) is an active-site residue.

This sequence belongs to the protein-tyrosine phosphatase family. Non-receptor class dual specificity subfamily. Interacts with STYXL1; the interaction inhibits PTPMT1 catalytic activity.

It is found in the mitochondrion inner membrane. It carries out the reaction a 1,2-diacyl-sn-glycero-3-phospho-(1'-sn-glycero-3'-phosphate) + H2O = a 1,2-diacyl-sn-glycero-3-phospho-(1'-sn-glycerol) + phosphate. The catalysed reaction is O-phospho-L-tyrosyl-[protein] + H2O = L-tyrosyl-[protein] + phosphate. The enzyme catalyses O-phospho-L-seryl-[protein] + H2O = L-seryl-[protein] + phosphate. It catalyses the reaction O-phospho-L-threonyl-[protein] + H2O = L-threonyl-[protein] + phosphate. It carries out the reaction 1,2-di-(9Z-octadecenoyl)-sn-glycero-3-phospho-(1'-sn-glycerol-3'-phosphate) + H2O = 1,2-di-(9Z-octadecenoyl)-sn-glycero-3-phospho-(1'-sn-glycerol) + phosphate. The catalysed reaction is 1,2-dioctanoyl-sn-glycero-3-phospho-(1D-myo-inositol-5-phosphate) + H2O = 1,2-dioctanoyl-sn-glycero-3-phospho-(1D-myo-inositol) + phosphate. The enzyme catalyses a 1-acyl-2-hexanoyl-sn-glycero-3-phospho-(1D-myo-inositol-5-phosphate) + H2O = a 1-acyl-2-hexanoyl-sn-glycero-3-phospho-(1D-myo-inositol) + phosphate. It catalyses the reaction 1,2-dibutyryl-sn-glycero-3-phospho-(1D-myo-inositol-5-phosphate) + H2O = 1,2-dibutyryl-sn-glycero-3-phospho-(1D-myo-inositol) + phosphate. Its pathway is phospholipid metabolism; phosphatidylglycerol biosynthesis; phosphatidylglycerol from CDP-diacylglycerol: step 2/2. In terms of biological role, lipid phosphatase which dephosphorylates phosphatidylglycerophosphate (PGP) to phosphatidylglycerol (PG). PGP is an essential intermediate in the biosynthetic pathway of cardiolipin, a mitochondrial-specific phospholipid regulating the membrane integrity and activities of the organelle. Has also been shown to display phosphatase activity toward phosphoprotein substrates, specifically mediates dephosphorylation of mitochondrial proteins, thereby playing an essential role in ATP production. Has probably a preference for proteins phosphorylated on Ser and/or Thr residues compared to proteins phosphorylated on Tyr residues. Probably involved in regulation of insulin secretion in pancreatic beta cells. May prevent intrinsic apoptosis, probably by regulating mitochondrial membrane integrity. The polypeptide is Phosphatidylglycerophosphatase and protein-tyrosine phosphatase 1 (Homo sapiens (Human)).